The primary structure comprises 687 residues: Glycine--tRNA ligase beta subunit (687 aa).

The protein belongs to the class-II aminoacyl-tRNA synthetase family. In terms of assembly, tetramer of two alpha and two beta subunits.

It localises to the cytoplasm. It carries out the reaction tRNA(Gly) + glycine + ATP = glycyl-tRNA(Gly) + AMP + diphosphate. This chain is Glycine--tRNA ligase beta subunit, found in Lactobacillus helveticus (strain DPC 4571).